The following is a 333-amino-acid chain: Phosphate acyltransferase (333 aa).

The protein belongs to the PlsX family. In terms of assembly, homodimer. Probably interacts with PlsY.

The protein resides in the cytoplasm. It catalyses the reaction a fatty acyl-[ACP] + phosphate = an acyl phosphate + holo-[ACP]. The protein operates within lipid metabolism; phospholipid metabolism. Functionally, catalyzes the reversible formation of acyl-phosphate (acyl-PO(4)) from acyl-[acyl-carrier-protein] (acyl-ACP). This enzyme utilizes acyl-ACP as fatty acyl donor, but not acyl-CoA. This chain is Phosphate acyltransferase, found in Pelagibacter ubique (strain HTCC1062).